The chain runs to 503 residues: ATP synthase subunit alpha (503 aa).

170–177 (GDRATGKT) contributes to the ATP binding site.

The protein belongs to the ATPase alpha/beta chains family. As to quaternary structure, F-type ATPases have 2 components, CF(1) - the catalytic core - and CF(0) - the membrane proton channel. CF(1) has five subunits: alpha(3), beta(3), gamma(1), delta(1), epsilon(1). CF(0) has three main subunits: a(1), b(2) and c(9-12). The alpha and beta chains form an alternating ring which encloses part of the gamma chain. CF(1) is attached to CF(0) by a central stalk formed by the gamma and epsilon chains, while a peripheral stalk is formed by the delta and b chains.

It is found in the cell inner membrane. It carries out the reaction ATP + H2O + 4 H(+)(in) = ADP + phosphate + 5 H(+)(out). In terms of biological role, produces ATP from ADP in the presence of a proton gradient across the membrane. The alpha chain is a regulatory subunit. The polypeptide is ATP synthase subunit alpha (Aquifex aeolicus (strain VF5)).